The sequence spans 267 residues: Triosephosphate isomerase (267 aa).

Asparagine 12–lysine 14 serves as a coordination point for substrate. Histidine 104 functions as the Electrophile in the catalytic mechanism. The Proton acceptor role is filled by glutamate 176. Residues glycine 182, serine 222, and glycine 243–glycine 244 contribute to the substrate site.

Belongs to the triosephosphate isomerase family. Homodimer.

The protein localises to the cytoplasm. The catalysed reaction is D-glyceraldehyde 3-phosphate = dihydroxyacetone phosphate. It functions in the pathway carbohydrate biosynthesis; gluconeogenesis. Its pathway is carbohydrate degradation; glycolysis; D-glyceraldehyde 3-phosphate from glycerone phosphate: step 1/1. Functionally, involved in the gluconeogenesis. Catalyzes stereospecifically the conversion of dihydroxyacetone phosphate (DHAP) to D-glyceraldehyde-3-phosphate (G3P). This Bifidobacterium longum (strain DJO10A) protein is Triosephosphate isomerase.